The primary structure comprises 330 residues: Glycerol-3-phosphate dehydrogenase [NAD(P)+] (330 aa).

The NADPH site is built by Ser-10, Trp-11, Arg-31, and Lys-105. The sn-glycerol 3-phosphate site is built by Lys-105, Gly-135, and Ser-137. Ala-139 is an NADPH binding site. Sn-glycerol 3-phosphate-binding residues include Lys-190, Asp-243, Ser-253, Arg-254, and Asn-255. Residue Lys-190 is the Proton acceptor of the active site. Arg-254 contributes to the NADPH binding site. Residues Val-278 and Glu-280 each coordinate NADPH.

It belongs to the NAD-dependent glycerol-3-phosphate dehydrogenase family.

It localises to the cytoplasm. It catalyses the reaction sn-glycerol 3-phosphate + NAD(+) = dihydroxyacetone phosphate + NADH + H(+). The enzyme catalyses sn-glycerol 3-phosphate + NADP(+) = dihydroxyacetone phosphate + NADPH + H(+). It functions in the pathway membrane lipid metabolism; glycerophospholipid metabolism. Catalyzes the reduction of the glycolytic intermediate dihydroxyacetone phosphate (DHAP) to sn-glycerol 3-phosphate (G3P), the key precursor for phospholipid synthesis. This chain is Glycerol-3-phosphate dehydrogenase [NAD(P)+], found in Nitratidesulfovibrio vulgaris (strain DP4) (Desulfovibrio vulgaris).